Here is an 827-residue protein sequence, read N- to C-terminus: SH3-containing GRB2-like protein 3-interacting protein 1 (827 aa).

3 disordered regions span residues 1–115, 142–205, and 223–278; these read MMEG…ESHK, SIGN…GPPL, and IWGS…QAAT. 2 stretches are compositionally biased toward basic and acidic residues: residues 16-32 and 40-54; these read RKKEKDTDSTGSPDRDG and PPYHSKAECAREGGK. Residues S78, S104, S105, S107, S149, S151, S156, and S169 each carry the phosphoserine modification. A phosphothreonine mark is found at T180 and T182. S236 bears the Phosphoserine mark. Residues 245–260 are compositionally biased toward pro residues; the sequence is TGTPPPLPPKAVPATP. A phosphothreonine mark is found at T247 and T259. S265, S287, S289, S300, S316, and S319 each carry phosphoserine. A compositionally biased stretch (polar residues) spans 265 to 276; the sequence is SPLTVATGNDQA. The span at 314-333 shows a compositional bias: basic and acidic residues; it reads HFSDASPEHVTPELTPREKV. Residues 314 to 523 are disordered; sequence HFSDASPEHV…LSAATTPTVE (210 aa). 3 positions are modified to phosphothreonine: T324, T328, and T335. A compositionally biased stretch (low complexity) spans 336–345; the sequence is PPAASDIPAD. The segment covering 346 to 369 has biased composition (pro residues); sequence SPAPGPPGPPGSAGPPGPPGPRHV. S371 carries the post-translational modification Phosphoserine. A compositionally biased stretch (basic and acidic residues) spans 377 to 392; that stretch reads EVQKKVAEQTFIKDDY. S398 is subject to Phosphoserine. Residue T409 is modified to Phosphothreonine. Residues 436–455 show a composition bias toward low complexity; the sequence is ASGASSPARPATPLVPCSST. Residues 456 to 474 are compositionally biased toward pro residues; that stretch reads TPPPPPPRPPSRPKLPPGK. Composition is skewed to low complexity over residues 481–491 and 498–521; these read SRPFSPPIHSS and PLARAESTSSISSTNSLSAATTPT. S485 carries the phosphoserine modification. Positions 558 to 826 constitute an MHD domain; that stretch reads TLPVAAAFTE…RFAAGKYLAD (269 aa). Interaction with DPF motifs-containing proteins regions lie at residues 560–566, 592–594, 666–669, and 812–817; these read PVAAAFT, SFP, TYYN, and SLIKKR. Residues 648–827 are necessary and sufficient to mediate interaction with CANX; the sequence is MPNLMTHLKK…FAAGKYLADN (180 aa).

In terms of assembly, interacts with proteins essential or regulating the formation of functional clathrin-coated pits. Interacts with CANX. Interacts with AP2A1. Interacts with EPS15. Interacts with SH3GL3. Interacts with AMPH. Interacts with ITSN1 (via SH3 domains). Interacts with and REPS1. In terms of tissue distribution, specifically expressed in brain (at protein level).

It is found in the membrane. The protein resides in the clathrin-coated pit. Its function is as follows. May function in clathrin-mediated endocytosis. Has both a membrane binding/tubulating activity and the ability to recruit proteins essential to the formation of functional clathrin-coated pits. Has a preference for membranes enriched in phosphatidylserine and phosphoinositides and is required for the endocytosis of the transferrin receptor. May also bind tubulin. May play a role in the regulation of energy homeostasis. The chain is SH3-containing GRB2-like protein 3-interacting protein 1 (Sgip1) from Rattus norvegicus (Rat).